Reading from the N-terminus, the 495-residue chain is B3 domain-containing protein Os01g0234100 (495 aa).

Disordered regions lie at residues 1–25 and 88–108; these read MAID…KMEQ and PGIP…NTTE. The span at 92–108 shows a compositional bias: polar residues; sequence QTCNTQNTSNGRTNTTE. Residues 152–243 constitute a DNA-binding region (TF-B3); sequence FVKHMLHSHV…KFKVHIIRDK (92 aa). The span at 268–282 shows a compositional bias: basic and acidic residues; the sequence is EATDNATKPKEDPET. A disordered region spans residues 268–289; that stretch reads EATDNATKPKEDPETTRVSSKV.

Its subcellular location is the nucleus. This Oryza sativa subsp. japonica (Rice) protein is B3 domain-containing protein Os01g0234100.